Consider the following 214-residue polypeptide: Rac-like GTP-binding protein 1 (214 aa).

GTP-binding positions include 17-24 (GDGAVGKT), 20-25 (AVGKTC), Thr-42, 64-68 (DTAGQ), Gly-67, 122-125 (TKLD), 123-125 (KLD), and 164-165 (SK). Residues 39-47 (YIPTVFDNF) carry the Effector region motif.

It belongs to the small GTPase superfamily. Rho family. As to quaternary structure, may interact with MPK1/MAPK6. Binds to RBOHB, preferentially in the GTP-bound form. Interacts with CCR1 in a GTP-dependent manner. May be palmitoylated.

The protein localises to the cytoplasm. The protein resides in the membrane. Its function is as follows. Small GTPase playing a general role in disease resistance signaling pathway. Acts downstream of heterotrimeric G protein alpha subunit. Regulates cell death and reactive oxygen species production, probably through NADPH oxidase. Also involved in sphingolipid elicitor (SE)-dependent defense signaling. Activates phytoalexin production and alters defense-related genes. Down-regulates metallothionein 2b, a reactive oxygen scavenger. May control lignin synthesis through regulation of both NADPH oxidase and CCR1 activities during defense responses. Stimulates lignin synthesis in suspension cell culture. In Oryza sativa subsp. japonica (Rice), this protein is Rac-like GTP-binding protein 1 (RAC1).